The following is a 205-amino-acid chain: Golgi apparatus membrane protein TVP23 homolog B (205 aa).

Met-1 carries the N-acetylmethionine modification. The tract at residues 1–21 is disordered; that stretch reads MLQQDSNDDTEDVSLFDAEEE. 4 consecutive transmembrane segments (helical) span residues 34–53, 54–72, 126–146, and 152–172; these read PVAS…VYLL, CELL…ILLL, IFWL…FSAL, and KWLA…YGYI.

The protein belongs to the TVP23 family.

Its subcellular location is the membrane. In Pongo abelii (Sumatran orangutan), this protein is Golgi apparatus membrane protein TVP23 homolog B (TVP23B).